The following is a 398-amino-acid chain: 1-deoxy-D-xylulose 5-phosphate reductoisomerase (398 aa).

T10, G11, S12, V13, G36, R37, N38, and N124 together coordinate NADPH. Residue K125 participates in 1-deoxy-D-xylulose 5-phosphate binding. Residue E126 participates in NADPH binding. Mn(2+) is bound at residue D150. 1-deoxy-D-xylulose 5-phosphate is bound by residues S151, E152, S186, and H209. A Mn(2+)-binding site is contributed by E152. G215 contacts NADPH. 1-deoxy-D-xylulose 5-phosphate is bound by residues S222, N227, K228, and E231. E231 serves as a coordination point for Mn(2+).

Belongs to the DXR family. Homodimer. The cofactor is Mg(2+). Mn(2+) serves as cofactor.

The catalysed reaction is 2-C-methyl-D-erythritol 4-phosphate + NADP(+) = 1-deoxy-D-xylulose 5-phosphate + NADPH + H(+). It functions in the pathway isoprenoid biosynthesis; isopentenyl diphosphate biosynthesis via DXP pathway; isopentenyl diphosphate from 1-deoxy-D-xylulose 5-phosphate: step 1/6. In terms of biological role, catalyzes the NADPH-dependent rearrangement and reduction of 1-deoxy-D-xylulose-5-phosphate (DXP) to 2-C-methyl-D-erythritol 4-phosphate (MEP). The protein is 1-deoxy-D-xylulose 5-phosphate reductoisomerase of Serratia proteamaculans (strain 568).